Here is a 339-residue protein sequence, read N- to C-terminus: Dihydroorotate dehydrogenase (quinone) (339 aa).

Residues 62–66 (AGLDK) and Thr86 each bind FMN. Lys66 is a substrate binding site. 111 to 115 (NRMGF) lines the substrate pocket. FMN is bound by residues Asn139 and Asn172. Asn172 contacts substrate. Ser175 serves as the catalytic Nucleophile. Position 177 (Asn177) interacts with substrate. Residues Lys217 and Thr245 each contribute to the FMN site. Residue 246–247 (NT) coordinates substrate. FMN contacts are provided by residues Gly268, Gly297, and 318–319 (YS).

The protein belongs to the dihydroorotate dehydrogenase family. Type 2 subfamily. As to quaternary structure, monomer. FMN serves as cofactor.

The protein localises to the cell membrane. It carries out the reaction (S)-dihydroorotate + a quinone = orotate + a quinol. Its pathway is pyrimidine metabolism; UMP biosynthesis via de novo pathway; orotate from (S)-dihydroorotate (quinone route): step 1/1. Its function is as follows. Catalyzes the conversion of dihydroorotate to orotate with quinone as electron acceptor. The polypeptide is Dihydroorotate dehydrogenase (quinone) (Shewanella denitrificans (strain OS217 / ATCC BAA-1090 / DSM 15013)).